The primary structure comprises 1717 residues: DNA-directed RNA polymerase I subunit RPA1 (1717 aa).

Zn(2+) is bound by residues Cys64, Cys67, Cys74, His77, Cys104, and Cys107. The tract at residues 110–201 (LTCPRAAIYL…VAQFWKTHMA (92 aa)) is clamp. Zn(2+) contacts are provided by Cys205 and Cys208. The tract at residues 327–433 (FTNGQTVNLQ…IRQILEKKEG (107 aa)) is clamp. Residues 410-423 (DSEMDKLMLEKYPG) are rudder. DNA is bound by residues Lys431, Arg436, and Arg443. An involved in RRN3 binding to Pol I complex region spans residues 475-549 (YPQPVTPWNV…QGTKVVCRHV (75 aa)). Arg559 is an RNA binding site. Mg(2+)-binding residues include Asp595, Asp597, and Asp599. Asp599 contributes to the RNA binding site. Residues 812-890 (KPNADVVRQR…NEINKACMPL (79 aa)) are funnel. The interval 967 to 1008 (RPPEFFFHCMAGREGLVDTAVKTSRSGYLQRCIIKHLEGLVI) is bridging helix. The segment at 1067-1162 (ADPQKVLGHI…SLSVWRPDIY (96 aa)) is mediates the interaction with TOP2A. The segment at 1214–1255 (PGEAVGLLAAQSIGEPSTQMTLNTFHFAGRGEMNVTLGIPRL) is trigger loop. Position 1256 (Arg1256) interacts with DNA. Residues 1372–1493 (RNVNSRRATQ…RRHSRPQGAE (122 aa)) form a disordered region. Residues 1380 to 1397 (TQKDLNDTEDSGRSQREE) are compositionally biased toward basic and acidic residues. Ser1393 is modified (phosphoserine). Acidic residues-rich tracts occupy residues 1398–1419 (ERDEEEEGNIVDAEAEEGDADA) and 1429–1450 (EEEVDYESEEEGEEEEEEEVQE). Residues 1452-1464 (GNIKGDGVHQGHE) are compositionally biased toward basic and acidic residues. Residues 1465–1477 (PDEEEHLGLEEEE) show a composition bias toward acidic residues.

It belongs to the RNA polymerase beta' chain family. Component of the RNA polymerase I (Pol I) complex consisting of 13 subunits: a ten-subunit catalytic core composed of POLR1A/RPA1, POLR1B/RPA2, POLR1C/RPAC1, POLR1D/RPAC2, POLR1H/RPA12, POLR2E/RPABC1, POLR2F/RPABC2, POLR2H/RPABC3, POLR2K/RPABC4 and POLR2L/RPABC5; a mobile stalk subunit POLR1F/RPA43 protruding from the core and additional subunits homologous to general transcription factors POLR1E/RPA49 and POLR1G/RPA34. Part of Pol I pre-initiation complex (PIC), in which Pol I core assembles with RRN3 and promoter-bound UTBF and SL1/TIF-IB complex. Interacts (via dock II domain) with TOP2A; this interaction may assist Pol I transcription initiation by releasing supercoils occurring during DNA unwinding. Interacts with CAVIN1; this interaction induces the dissociation of Pol I complex paused at rDNA terminator sequences. Interacts with MYO1C. Interacts with ERBB2. Interacts with DDX11. Interacts with RECQL5. The cofactor is Mg(2+). Post-translationally, phosphorylated.

The protein localises to the nucleus. It localises to the nucleolus. Its subcellular location is the chromosome. The catalysed reaction is RNA(n) + a ribonucleoside 5'-triphosphate = RNA(n+1) + diphosphate. Its function is as follows. Catalytic core component of RNA polymerase I (Pol I), a DNA-dependent RNA polymerase which synthesizes ribosomal RNA precursors using the four ribonucleoside triphosphates as substrates. Transcribes 47S pre-rRNAs from multicopy rRNA gene clusters, giving rise to 5.8S, 18S and 28S ribosomal RNAs. Pol I-mediated transcription cycle proceeds through transcription initiation, transcription elongation and transcription termination stages. During transcription initiation, Pol I pre-initiation complex (PIC) is recruited by the selectivity factor 1 (SL1/TIF-IB) complex bound to the core promoter that precedes an rDNA repeat unit. The PIC assembly bends the promoter favoring the formation of the transcription bubble and promoter escape. Once the polymerase has escaped from the promoter it enters the elongation phase during which RNA is actively polymerized, based on complementarity with the template DNA strand. Highly processive, assembles in structures referred to as 'Miller trees' where many elongating Pol I complexes queue and transcribe the same rDNA coding regions. At terminator sequences downstream of the rDNA gene, PTRF interacts with Pol I and halts Pol I transcription leading to the release of the RNA transcript and polymerase from the DNA. Forms Pol I active center together with the second largest subunit POLR1B/RPA2. Appends one nucleotide at a time to the 3' end of the nascent RNA, with POLR1A/RPA1 contributing a Mg(2+)-coordinating DxDGD motif, and POLR1B/RPA2 participating in the coordination of a second Mg(2+) ion and providing lysine residues believed to facilitate Watson-Crick base pairing between the incoming nucleotide and the template base. Typically, Mg(2+) ions direct a 5' nucleoside triphosphate to form a phosphodiester bond with the 3' hydroxyl of the preceding nucleotide of the nascent RNA, with the elimination of pyrophosphate. Has proofreading activity: Pauses and backtracks to allow the cleavage of a missincorporated nucleotide via POLR1H/RPA12. High Pol I processivity is associated with decreased transcription fidelity. This chain is DNA-directed RNA polymerase I subunit RPA1, found in Mus musculus (Mouse).